The chain runs to 262 residues: Cytochrome c oxidase subunit 3 (262 aa).

7 consecutive transmembrane segments (helical) span residues 16–36 (PWPL…VQWF), 42–59 (TLFL…YQWW), 83–103 (GMIL…WAFF), 128–148 (FQIP…VTWA), 163–183 (SLFF…YEYI), 198–218 (FFVA…FLLI), and 240–260 (AWYW…IYWW).

It belongs to the cytochrome c oxidase subunit 3 family. As to quaternary structure, component of the cytochrome c oxidase (complex IV, CIV), a multisubunit enzyme composed of a catalytic core of 3 subunits and several supernumerary subunits. The complex exists as a monomer or a dimer and forms supercomplexes (SCs) in the inner mitochondrial membrane with ubiquinol-cytochrome c oxidoreductase (cytochrome b-c1 complex, complex III, CIII).

It is found in the mitochondrion inner membrane. The catalysed reaction is 4 Fe(II)-[cytochrome c] + O2 + 8 H(+)(in) = 4 Fe(III)-[cytochrome c] + 2 H2O + 4 H(+)(out). Its function is as follows. Component of the cytochrome c oxidase, the last enzyme in the mitochondrial electron transport chain which drives oxidative phosphorylation. The respiratory chain contains 3 multisubunit complexes succinate dehydrogenase (complex II, CII), ubiquinol-cytochrome c oxidoreductase (cytochrome b-c1 complex, complex III, CIII) and cytochrome c oxidase (complex IV, CIV), that cooperate to transfer electrons derived from NADH and succinate to molecular oxygen, creating an electrochemical gradient over the inner membrane that drives transmembrane transport and the ATP synthase. Cytochrome c oxidase is the component of the respiratory chain that catalyzes the reduction of oxygen to water. Electrons originating from reduced cytochrome c in the intermembrane space (IMS) are transferred via the dinuclear copper A center (CU(A)) of subunit 2 and heme A of subunit 1 to the active site in subunit 1, a binuclear center (BNC) formed by heme A3 and copper B (CU(B)). The BNC reduces molecular oxygen to 2 water molecules using 4 electrons from cytochrome c in the IMS and 4 protons from the mitochondrial matrix. The sequence is that of Cytochrome c oxidase subunit 3 from Aedes aegypti (Yellowfever mosquito).